Consider the following 224-residue polypeptide: UPF0758 protein AHA_0160 (224 aa).

The region spanning 102–224 (PLTSPQLTRD…TVSFAERGWL (123 aa)) is the MPN domain. Histidine 173, histidine 175, and aspartate 186 together coordinate Zn(2+). The JAMM motif motif lies at 173-186 (HNHPSGVAEPSRAD).

It belongs to the UPF0758 family.

The protein is UPF0758 protein AHA_0160 of Aeromonas hydrophila subsp. hydrophila (strain ATCC 7966 / DSM 30187 / BCRC 13018 / CCUG 14551 / JCM 1027 / KCTC 2358 / NCIMB 9240 / NCTC 8049).